The following is a 346-amino-acid chain: Cell division protein ZipA (346 aa).

At 1-6 the chain is on the periplasmic side; it reads MEDLQL. The chain crosses the membrane as a helical span at residues 7–27; sequence VLFVLGAIAIVAVLVHGFWSI. Residues 28–346 lie on the Cytoplasmic side of the membrane; that stretch reads RRQQPKSLKD…DYLHRIRANA (319 aa). 2 disordered regions span residues 76 to 103 and 121 to 145; these read ANEA…QPVE and QPDF…RQEP.

It belongs to the ZipA family. In terms of assembly, interacts with FtsZ via their C-terminal domains.

Its subcellular location is the cell inner membrane. In terms of biological role, essential cell division protein that stabilizes the FtsZ protofilaments by cross-linking them and that serves as a cytoplasmic membrane anchor for the Z ring. Also required for the recruitment to the septal ring of downstream cell division proteins. This Shewanella sp. (strain MR-4) protein is Cell division protein ZipA.